A 444-amino-acid chain; its full sequence is Exodeoxyribonuclease 7 large subunit (444 aa).

The protein belongs to the XseA family. In terms of assembly, heterooligomer composed of large and small subunits.

It is found in the cytoplasm. It carries out the reaction Exonucleolytic cleavage in either 5'- to 3'- or 3'- to 5'-direction to yield nucleoside 5'-phosphates.. Functionally, bidirectionally degrades single-stranded DNA into large acid-insoluble oligonucleotides, which are then degraded further into small acid-soluble oligonucleotides. In Aliivibrio salmonicida (strain LFI1238) (Vibrio salmonicida (strain LFI1238)), this protein is Exodeoxyribonuclease 7 large subunit.